Reading from the N-terminus, the 335-residue chain is Dihydroorotate dehydrogenase (quinone) (335 aa).

FMN is bound by residues 61-65 (AGLDK) and threonine 85. Substrate is bound at residue lysine 65. 110–114 (NRMGF) contacts substrate. Residues asparagine 138 and asparagine 171 each coordinate FMN. Substrate is bound at residue asparagine 171. Catalysis depends on serine 174, which acts as the Nucleophile. A substrate-binding site is contributed by asparagine 176. Positions 216 and 244 each coordinate FMN. 245–246 (NT) contributes to the substrate binding site. FMN is bound by residues glycine 267, glycine 296, and 317–318 (YS).

The protein belongs to the dihydroorotate dehydrogenase family. Type 2 subfamily. In terms of assembly, monomer. FMN serves as cofactor.

It is found in the cell membrane. It carries out the reaction (S)-dihydroorotate + a quinone = orotate + a quinol. It functions in the pathway pyrimidine metabolism; UMP biosynthesis via de novo pathway; orotate from (S)-dihydroorotate (quinone route): step 1/1. Its function is as follows. Catalyzes the conversion of dihydroorotate to orotate with quinone as electron acceptor. This chain is Dihydroorotate dehydrogenase (quinone), found in Pseudoalteromonas atlantica (strain T6c / ATCC BAA-1087).